A 356-amino-acid chain; its full sequence is C-X-C chemokine receptor type 2 (356 aa).

At 1–46 (MEYINWDNYSLEDLFGDIDNYTYNTEMPIIPADSAPCRPESLDINK) the chain is on the extracellular side. 2 N-linked (GlcNAc...) asparagine glycosylation sites follow: Asn-8 and Asn-20. The helical transmembrane segment at 47 to 73 (YAVVVIYVLVFVLNLLGNSLVIMVVLY) threads the bilayer. At 74–82 (SRVSHSVTD) the chain is on the cytoplasmic side. Residues 83–103 (VYLLNLAIADLLFALTLPIWA) form a helical membrane-spanning segment. The Extracellular portion of the chain corresponds to 104 to 118 (VSKVKGWIFGTPLCK). A disulfide bond links Cys-117 and Cys-194. Residues 119–140 (IVSLLKEVNFYSGILLLASISM) form a helical membrane-spanning segment. At 141–161 (DRYLAIVHATRRLTQKKHWVK) the chain is on the cytoplasmic side. A helical transmembrane segment spans residues 162–181 (FICLGIWALSLILSLPIFVF). The Extracellular segment spans residues 182 to 206 (RRAINPPYSSPVCYEDMGTNTTKLR). Residues 207-229 (IVMRALPQTFGFIVPLMIMLFCY) traverse the membrane as a helical segment. Residues 230–249 (GLTLRTLFEAHMGQKHRAMR) lie on the Cytoplasmic side of the membrane. A helical transmembrane segment spans residues 250-269 (VIFAVVLVFLLCWLPYNLVA). Residues 270–290 (DTLMRLQAIEETCQRRNDIGR) are Extracellular-facing. The chain crosses the membrane as a helical span at residues 291–311 (ALDATEILGFFHSCLNPLIYA). Over 312–356 (FIGQKFRHGLLKIMAFHGLISKEYLPKDSRPSFVGSSSANTSTTF) the chain is Cytoplasmic.

It belongs to the G-protein coupled receptor 1 family. As to quaternary structure, interacts with IL8. Interacts with GNAI2. Post-translationally, phosphorylated upon ligand binding; which is required for desensitization.

The protein localises to the cell membrane. Its function is as follows. Receptor for interleukin-8 which is a powerful neutrophil chemotactic factor. Binding of IL-8 to the receptor causes activation of neutrophils. This response is mediated via a G-protein that activates a phosphatidylinositol-calcium second messenger system. Binds to IL-8 with high affinity. Also binds with high affinity to CXCL3, GRO/MGSA and NAP-2. The chain is C-X-C chemokine receptor type 2 (CXCR2) from Canis lupus familiaris (Dog).